The primary structure comprises 406 residues: Zinc metalloprotease Rip1 (406 aa).

The helical transmembrane segment at 1-21 (MMFGIGIVLFALAILVSVALH) threads the bilayer. Residue H21 participates in Zn(2+) binding. Residue E22 is part of the active site. H25 lines the Zn(2+) pocket. The chain crosses the membrane as a helical span at residues 108-128 (PAMNFVIGLVLIYGIAIVWGL). Residues 125-209 (VWGLPNLHQP…RIEFKRDGRV (85 aa)) form the PDZ domain. D206 is a Zn(2+) binding site. 2 helical membrane-spanning segments follow: residues 327–349 (NFVL…IAVA) and 375–395 (LMPA…LTVT).

This sequence belongs to the peptidase M50B family. It depends on Zn(2+) as a cofactor.

It is found in the cell membrane. Its activity is regulated as follows. Proteolysis is inhibited by Wag31; when Wag31 is non-functional oxidative stress increases proteolysis. Functionally, a probable intramembrane site-2 protease (S2P) that cleaves type-2 transmembrane proteins within their membrane-spanning domains. Degrades PbpB (PBP3, FtsI) under conditions of oxidatives stress; degradation is inhibited by Wag31-PbpB interaction. Also cleaves anti-sigma factors RskA, RslA and RslM. Site-1 proteases have not yet been identified in this organism. In terms of biological role, regulated intramembrane proteolysis (RIP) occurs when an extracytoplasmic signal (possibly oxidative stress) triggers a concerted proteolytic cascade to transmit information and elicit cellular responses. The membrane-spanning regulatory substrate protein (includes anti-sigma factors RskA, RslA, RsmA, and PbpB) is first cut extracytoplasmically (site-1 protease, S1P), then within the membrane itself (site-2 protease, S2P, this entry), while cytoplasmic proteases finish degrading the regulatory protein, liberating the effector protein (ECF sigma factors SigK, SigL and SigM). The polypeptide is Zinc metalloprotease Rip1 (rip1) (Mycolicibacterium smegmatis (strain ATCC 700084 / mc(2)155) (Mycobacterium smegmatis)).